The following is an 877-amino-acid chain: Translation initiation factor IF-2 (877 aa).

The tract at residues 48–289 (SSFQNSAPAE…QITKRKERPL (242 aa)) is disordered. Residues 78–89 (RKNEKKPEENNT) are compositionally biased toward basic and acidic residues. The span at 92–101 (KSNRRRNNKR) shows a compositional bias: basic residues. Residues 102–116 (RSSDRARDNKERDAK) show a composition bias toward basic and acidic residues. The span at 123–132 (KAAALLQQFK) shows a compositional bias: low complexity. 2 stretches are compositionally biased toward basic and acidic residues: residues 135 to 155 (QRAE…EYHE) and 162 to 189 (KEQS…EKKV). Residues 277-286 (PRKQITKRKE) show a composition bias toward basic residues. The 170-residue stretch at 378-547 (KRPPVVTIMG…LLQADVMELK (170 aa)) folds into the tr-type G domain. The tract at residues 387–394 (GHVDHGKT) is G1. 387–394 (GHVDHGKT) serves as a coordination point for GTP. The segment at 412–416 (GITQR) is G2. The interval 433–436 (DTPG) is G3. GTP contacts are provided by residues 433–437 (DTPGH) and 487–490 (NKMD). The tract at residues 487 to 490 (NKMD) is G4. The interval 523–525 (SAK) is G5.

Belongs to the TRAFAC class translation factor GTPase superfamily. Classic translation factor GTPase family. IF-2 subfamily.

It is found in the cytoplasm. One of the essential components for the initiation of protein synthesis. Protects formylmethionyl-tRNA from spontaneous hydrolysis and promotes its binding to the 30S ribosomal subunits. Also involved in the hydrolysis of GTP during the formation of the 70S ribosomal complex. In Lactobacillus acidophilus (strain ATCC 700396 / NCK56 / N2 / NCFM), this protein is Translation initiation factor IF-2.